The sequence spans 364 residues: Lysophosphatidic acid receptor 1 (364 aa).

The Extracellular portion of the chain corresponds to 1–50 (MAAAFTSSPVVSQPQFTAMNEQQCFSNESIAFFYNRSGKYLATEWNTVTK). Disulfide bonds link Cys-24-Cys-190 and Cys-188-Cys-195. Residues Asn-27 and Asn-35 are each glycosylated (N-linked (GlcNAc...) asparagine). Lys-39 is an a 1-acyl-sn-glycero-3-phosphate binding site. A helical transmembrane segment spans residues 51-75 (LVMGLGITVCIFIMLANLLVMVAIY). Residues 76-83 (VNRRFHFP) are Cytoplasmic-facing. The helical transmembrane segment at 84 to 107 (IYYLMANLAAADFFAGLAYFYLMF) threads the bilayer. Topologically, residues 108 to 121 (NTGPNTRRLTVSTW) are extracellular. A helical membrane pass occupies residues 122 to 144 (LLRQGLIDTSLTVSVANLLAIAI). 124–129 (RQGLID) provides a ligand contact to a 1-acyl-sn-glycero-3-phosphate. Over 145–163 (ERHITVFRMQLHARMSNRR) the chain is Cytoplasmic. Residues 164 to 184 (VVVVIVVIWTMAIVMGAIPSV) traverse the membrane as a helical segment. At 185-204 (GWNCICDIENCSNMAPLYSD) the chain is on the extracellular side. The helical transmembrane segment at 205–225 (SYLVFWAIFNLVTFVVMVVLY) threads the bilayer. Trp-210 is an a 1-acyl-sn-glycero-3-phosphate binding site. The Cytoplasmic portion of the chain corresponds to 226-255 (AHIFGYVRQRTMRMSRHSSGPRRNRDTMMS). A helical transmembrane segment spans residues 256-280 (LLKTVVIVLGAFIICWTPGLVLLLL). The Extracellular segment spans residues 281–294 (DVCCPQCDVLAYEK). A disulfide bridge connects residues Cys-284 and Cys-287. The chain crosses the membrane as a helical span at residues 295 to 315 (FFLLLAEFNSAMNPIIYSYRD). The Cytoplasmic segment spans residues 316 to 364 (KEMSATFRQILCCQRSENTSGPTEGSDRSASSLNHTILAGVHSNDHSVV). Position 341 is a phosphoserine (Ser-341). Thr-351 carries the phosphothreonine modification.

The protein belongs to the G-protein coupled receptor 1 family. As to quaternary structure, interacts with RALA and GRK2. Interacts with GNAQ and GNA13. Interacts with CD14; the interaction is enhanced by exposure to bacterial lipopolysaccharide (LPS). Post-translationally, N-glycosylated.

It localises to the cell surface. It is found in the cell membrane. The protein resides in the endosome. Functionally, receptor for lysophosphatidic acid (LPA). Plays a role in the reorganization of the actin cytoskeleton, cell migration, differentiation and proliferation, and thereby contributes to the responses to tissue damage and infectious agents. Activates downstream signaling cascades via the G(i)/G(o), G(12)/G(13), and G(q) families of heteromeric G proteins. Signaling inhibits adenylyl cyclase activity and decreases cellular cAMP levels. Signaling triggers an increase of cytoplasmic Ca(2+) levels. Activates RALA; this leads to the activation of phospholipase C (PLC) and the formation of inositol 1,4,5-trisphosphate. Signaling mediates activation of down-stream MAP kinases. Contributes to the regulation of cell shape. Promotes Rho-dependent reorganization of the actin cytoskeleton in neuronal cells and neurite retraction. Promotes the activation of Rho and the formation of actin stress fibers. Promotes formation of lamellipodia at the leading edge of migrating cells via activation of RAC1. Through its function as LPA receptor, plays a role in chemotaxis and cell migration, including responses to injury and wounding. Plays a role in triggering inflammation in response to bacterial lipopolysaccharide (LPS) via its interaction with CD14. Promotes cell proliferation in response to LPA. Inhibits the intracellular ciliogenesis pathway in response to LPA and through AKT1 activation. Required for normal skeleton development. May play a role in osteoblast differentiation. Required for normal brain development. Required for normal proliferation, survival and maturation of newly formed neurons in the adult dentate gyrus. Plays a role in pain perception and in the initiation of neuropathic pain. The protein is Lysophosphatidic acid receptor 1 (LPAR1) of Bos taurus (Bovine).